We begin with the raw amino-acid sequence, 342 residues long: MLASSPMLLFLLSLLMAYNFDTTAGQIGVCFGQMGNNIPNPSEVVAMFKQYSIPRMRMYGPNPDALNALRGSNIEFILDVPNGDLKRLADSQAEANTWVRDNVQKYNDVRFKYISVGNEVKPGEPGAAALIQAMQNIDRALSAAGLSNIKVSTTTFMGPSRNTYPPSRGRFKDEYRNFLQPVIGFLVNKRSPLLVNIYTYFGYMNRDVSLQFALLQPNSNNEFTDPNNQLRYLNFFDANLDSVYAALEKSGGGSLDVVVSESGWPTQGGPGASVPNAEAYVNNLRLHVNKNGSPKRQEAIETYIFAMFDEAPRQTSPNDEYEKYWGMFSPTTRQLKYGVKFN.

Residues 1–26 (MLASSPMLLFLLSLLMAYNFDTTAGQ) form the signal peptide. Glutamate 119 functions as the Proton donor in the catalytic mechanism. Glutamate 261 serves as the catalytic Nucleophile.

Belongs to the glycosyl hydrolase 17 family. Post-translationally, the N-terminus is blocked.

The protein localises to the vacuole. It catalyses the reaction Hydrolysis of (1-&gt;3)-beta-D-glucosidic linkages in (1-&gt;3)-beta-D-glucans.. Functionally, is thought to be an important plant defense-related product against fungal pathogens. Accumulation of the glucanase can be detected as early as 4 hours after inoculation. The protein is Glucan endo-1,3-beta-glucosidase (BGL) of Brassica campestris (Field mustard).